Reading from the N-terminus, the 90-residue chain is Probable Fe(2+)-trafficking protein (90 aa).

Belongs to the Fe(2+)-trafficking protein family. In terms of assembly, monomer.

In terms of biological role, could be a mediator in iron transactions between iron acquisition and iron-requiring processes, such as synthesis and/or repair of Fe-S clusters in biosynthetic enzymes. The sequence is that of Probable Fe(2+)-trafficking protein from Yersinia pestis bv. Antiqua (strain Antiqua).